The sequence spans 106 residues: Ribosomal protein eL42-like (106 aa).

The interval 26 to 53 (YKKGKDSLYAQGRRRYDRKQSGYGGQTK) is disordered. Residue Lys-53 is modified to N6-methyllysine.

It belongs to the eukaryotic ribosomal protein eL42 family. Ubiquitously expressed.

It is found in the cytoplasm. This chain is Ribosomal protein eL42-like (RPL36AL), found in Homo sapiens (Human).